Reading from the N-terminus, the 848-residue chain is Alanine--tRNA ligase (848 aa).

Zn(2+) contacts are provided by histidine 553, histidine 557, cysteine 654, and histidine 658.

Belongs to the class-II aminoacyl-tRNA synthetase family. Zn(2+) serves as cofactor.

It is found in the cytoplasm. It carries out the reaction tRNA(Ala) + L-alanine + ATP = L-alanyl-tRNA(Ala) + AMP + diphosphate. In terms of biological role, catalyzes the attachment of alanine to tRNA(Ala) in a two-step reaction: alanine is first activated by ATP to form Ala-AMP and then transferred to the acceptor end of tRNA(Ala). Also edits incorrectly charged Ser-tRNA(Ala) and Gly-tRNA(Ala) via its editing domain. The protein is Alanine--tRNA ligase of Neorickettsia sennetsu (strain ATCC VR-367 / Miyayama) (Ehrlichia sennetsu).